Here is a 453-residue protein sequence, read N- to C-terminus: tRNA modification GTPase MnmE (453 aa).

Positions 22, 79, and 119 each coordinate (6S)-5-formyl-5,6,7,8-tetrahydrofolate. The TrmE-type G domain occupies 215–376 (GMKVVIAGRP…LKQHLKSLMG (162 aa)). Residue asparagine 225 participates in K(+) binding. Residues 225-230 (NAGKSS), 244-250 (TEIAGTT), 269-272 (DTAG), and 334-337 (NKAD) contribute to the GTP site. Serine 229 provides a ligand contact to Mg(2+). K(+) contacts are provided by threonine 244, isoleucine 246, and threonine 249. Threonine 250 is a binding site for Mg(2+). Residue lysine 453 coordinates (6S)-5-formyl-5,6,7,8-tetrahydrofolate.

It belongs to the TRAFAC class TrmE-Era-EngA-EngB-Septin-like GTPase superfamily. TrmE GTPase family. As to quaternary structure, homodimer. Heterotetramer of two MnmE and two MnmG subunits. Requires K(+) as cofactor.

The protein localises to the cytoplasm. In terms of biological role, exhibits a very high intrinsic GTPase hydrolysis rate. Involved in the addition of a carboxymethylaminomethyl (cmnm) group at the wobble position (U34) of certain tRNAs, forming tRNA-cmnm(5)s(2)U34. The sequence is that of tRNA modification GTPase MnmE from Shewanella baltica (strain OS185).